A 318-amino-acid polypeptide reads, in one-letter code: NF-kappa-B inhibitor alpha (318 aa).

The interval 1–44 (MLSAHRPAEPPAVEGCEPPRKERQGGLLPPDDRHDSGLDSMKEE) is disordered. A compositionally biased stretch (basic and acidic residues) spans 17–44 (EPPRKERQGGLLPPDDRHDSGLDSMKEE). K21 is covalently cross-linked (Glycyl lysine isopeptide (Lys-Gly) (interchain with G-Cter in ubiquitin)). S36 bears the Phosphoserine; by IKKA and IKKB mark. Residue S40 is modified to Phosphoserine; by IKKA, IKKB and IKKE. Position 46 is a phosphotyrosine; by Tyr-kinases (Y46). 4 ANK repeats span residues 114–143 (LSQT…DLDV), 147–176 (RGNT…PHHL), 186–215 (NGHT…DVNA), and 220–249 (NGRT…DVNK).

Belongs to the NF-kappa-B inhibitor family. Phosphorylated at Ser-36 and Ser-40 by IKKA/CHUK and IKKB/IKBKB; disables inhibition of NF-kappa-B DNA-binding activity. Phosphorylation at positions 36 and 40 is prerequisite to polyubiquitination and subsequent degradation. Post-translationally, monoubiquitinated at Lys-21 following phosphorylation at Ser-36 and Ser-40. The resulting polyubiquitination leads to protein degradation. In terms of processing, hydroxylated by HIF1AN. As to expression, highly expressed in lymph node, thymus followed by liver, brain, muscle, kidney, gastrointestinal and reproductive tract.

Its subcellular location is the cytoplasm. The protein localises to the nucleus. Inhibits the activity of dimeric NF-kappa-B/REL complexes by trapping REL (RELA/p65 and NFKB1/p50) dimers in the cytoplasm by masking their nuclear localization signals. On cellular stimulation by immune and pro-inflammatory responses, becomes phosphorylated promoting ubiquitination and degradation, enabling the dimeric RELA to translocate to the nucleus and activate transcription. This is NF-kappa-B inhibitor alpha (NFKBIA) from Gallus gallus (Chicken).